Consider the following 240-residue polypeptide: Uridylate kinase (240 aa).

Position 13 to 16 (13 to 16 (KASG)) interacts with ATP. Positions 21 to 26 (GAQGFG) are involved in allosteric activation by GTP. UMP is bound at residue glycine 55. ATP contacts are provided by glycine 56 and arginine 60. UMP is bound by residues aspartate 75 and 136-143 (TGNPFFTT). Positions 163, 164, 169, and 172 each coordinate ATP.

The protein belongs to the UMP kinase family. As to quaternary structure, homohexamer.

It is found in the cytoplasm. It catalyses the reaction UMP + ATP = UDP + ADP. Its pathway is pyrimidine metabolism; CTP biosynthesis via de novo pathway; UDP from UMP (UMPK route): step 1/1. With respect to regulation, allosterically activated by GTP. Inhibited by UTP. In terms of biological role, catalyzes the reversible phosphorylation of UMP to UDP. This chain is Uridylate kinase, found in Rhizobium etli (strain ATCC 51251 / DSM 11541 / JCM 21823 / NBRC 15573 / CFN 42).